We begin with the raw amino-acid sequence, 170 residues long: Aspartate 1-decarboxylase (170 aa).

S25 (schiff-base intermediate with substrate; via pyruvic acid) is an active-site residue. S25 carries the pyruvic acid (Ser) modification. Position 57 (T57) interacts with substrate. Catalysis depends on Y58, which acts as the Proton donor. G73–A75 contributes to the substrate binding site. The segment at G118–R170 is disordered.

The protein belongs to the PanD family. As to quaternary structure, heterooctamer of four alpha and four beta subunits. The cofactor is pyruvate. Is synthesized initially as an inactive proenzyme, which is activated by self-cleavage at a specific serine bond to produce a beta-subunit with a hydroxyl group at its C-terminus and an alpha-subunit with a pyruvoyl group at its N-terminus.

The protein localises to the cytoplasm. The enzyme catalyses L-aspartate + H(+) = beta-alanine + CO2. It participates in cofactor biosynthesis; (R)-pantothenate biosynthesis; beta-alanine from L-aspartate: step 1/1. Catalyzes the pyruvoyl-dependent decarboxylation of aspartate to produce beta-alanine. The protein is Aspartate 1-decarboxylase of Frankia alni (strain DSM 45986 / CECT 9034 / ACN14a).